The chain runs to 509 residues: Meiotically up-regulated gene 157 protein (509 aa).

The next 5 membrane-spanning stretches (helical) occupy residues 4-24 (WQAI…NIPW), 140-160 (LATL…QFPY), 296-316 (ACVL…LSHL), 368-388 (ILFM…LGFV), and 417-437 (ISGI…SLIV).

The protein resides in the endoplasmic reticulum membrane. Has a role in meiosis. This is Meiotically up-regulated gene 157 protein (mug157) from Schizosaccharomyces pombe (strain 972 / ATCC 24843) (Fission yeast).